Reading from the N-terminus, the 519-residue chain is MTQADNQNPKPMVLIILDGFGESDETTHNAIKEANTPTLDKLFRHYPHTLLEASGRAVGLPDGQMGNSEVGHLHIGGGRKVPQDLTRIDAAIASGEFYENPALIEALEKAKALNKAVHILGLLSPGGVHSRDNQIAALVELAHRCGIKKIYLHAILDGRDTPPKSALLSIEKITDQFHAYGNGKIASLIGRYYAMDRDKRWDRTEKAYDLLTQGTAQFHALTAKEGLMLAYEQGNTDEFVSPTSIHRHNETPITIEDGDVVVFMNFRADRARQLTYAFLDDHFTAFNRQVRPKLSAFVTLTAYAKDIHAAVAFPPLELHNTLGEYLSARGYRQLRIAETEKYAHVTYFLNGGQEAPFNGEDRLLIPSPKVATYDLQPEMSAVEMTNKLVEIIQNDDYDLIVCNFANPDMVGHTGDETATREAIQVIDDCLKRIITALQSVGGEALITADHGNAEKMFDEKTNQPHTAHTSNLVPLIYVGREAQFCKEVGALDDVAPTLLYLMGLEKPREMTGRNLITLK.

Mn(2+) contacts are provided by Asp-18 and Ser-68. The Phosphoserine intermediate role is filled by Ser-68. Residues His-129, 159–160, Arg-191, Arg-197, 267–270, and Lys-341 contribute to the substrate site; these read RD and RADR. Residues Asp-408, His-412, Asp-449, His-450, and His-468 each contribute to the Mn(2+) site.

The protein belongs to the BPG-independent phosphoglycerate mutase family. In terms of assembly, monomer. The cofactor is Mn(2+).

The enzyme catalyses (2R)-2-phosphoglycerate = (2R)-3-phosphoglycerate. It functions in the pathway carbohydrate degradation; glycolysis; pyruvate from D-glyceraldehyde 3-phosphate: step 3/5. Catalyzes the interconversion of 2-phosphoglycerate and 3-phosphoglycerate. The protein is 2,3-bisphosphoglycerate-independent phosphoglycerate mutase of Coxiella burnetii (strain RSA 493 / Nine Mile phase I).